We begin with the raw amino-acid sequence, 233 residues long: Large ribosomal subunit protein uL1 (233 aa).

Belongs to the universal ribosomal protein uL1 family. Part of the 50S ribosomal subunit.

Its function is as follows. Binds directly to 23S rRNA. The L1 stalk is quite mobile in the ribosome, and is involved in E site tRNA release. Protein L1 is also a translational repressor protein, it controls the translation of the L11 operon by binding to its mRNA. This chain is Large ribosomal subunit protein uL1, found in Syntrophotalea carbinolica (strain DSM 2380 / NBRC 103641 / GraBd1) (Pelobacter carbinolicus).